The following is a 428-amino-acid chain: Adenylosuccinate synthetase (428 aa).

GTP-binding positions include 12–18 (GDEGKGK) and 40–42 (GHT). D13 functions as the Proton acceptor in the catalytic mechanism. Residues D13 and G40 each coordinate Mg(2+). Residues 13–16 (DEGK), 38–41 (NAGH), T128, R142, Q222, T237, and R301 each bind IMP. Catalysis depends on H41, which acts as the Proton donor. Position 297–303 (297–303 (VNTGRAR)) interacts with substrate. GTP is bound by residues R303, 329–331 (KLD), and 411–413 (STS).

This sequence belongs to the adenylosuccinate synthetase family. In terms of assembly, homodimer. It depends on Mg(2+) as a cofactor.

The protein resides in the cytoplasm. The catalysed reaction is IMP + L-aspartate + GTP = N(6)-(1,2-dicarboxyethyl)-AMP + GDP + phosphate + 2 H(+). The protein operates within purine metabolism; AMP biosynthesis via de novo pathway; AMP from IMP: step 1/2. Its function is as follows. Plays an important role in the de novo pathway of purine nucleotide biosynthesis. Catalyzes the first committed step in the biosynthesis of AMP from IMP. The protein is Adenylosuccinate synthetase of Caulobacter sp. (strain K31).